Reading from the N-terminus, the 629-residue chain is tRNA uridine 5-carboxymethylaminomethyl modification enzyme MnmG (629 aa).

13–18 lines the FAD pocket; that stretch reads GGGHAG. Position 273 to 287 (273 to 287) interacts with NAD(+); sequence GPRYCPSIEDKITRF.

The protein belongs to the MnmG family. As to quaternary structure, homodimer. Heterotetramer of two MnmE and two MnmG subunits. Requires FAD as cofactor.

The protein localises to the cytoplasm. Functionally, NAD-binding protein involved in the addition of a carboxymethylaminomethyl (cmnm) group at the wobble position (U34) of certain tRNAs, forming tRNA-cmnm(5)s(2)U34. The polypeptide is tRNA uridine 5-carboxymethylaminomethyl modification enzyme MnmG (Aeromonas hydrophila subsp. hydrophila (strain ATCC 7966 / DSM 30187 / BCRC 13018 / CCUG 14551 / JCM 1027 / KCTC 2358 / NCIMB 9240 / NCTC 8049)).